We begin with the raw amino-acid sequence, 1866 residues long: Protein strawberry notch homolog (1866 aa).

Positions 19-28 are enriched in low complexity; the sequence is QQSSPTPSTS. 5 disordered regions span residues 19 to 63, 132 to 151, 156 to 253, 561 to 581, and 1112 to 1308; these read QQSS…HSSS, TAPT…IVPK, LFET…GLPI, GMAS…QKAK, and GLSG…ARGS. Composition is skewed to polar residues over residues 37–63 and 134–146; these read QSFS…HSSS and PTVN…TPTV. Residues 161 to 176 are compositionally biased toward low complexity; sequence TADSPTPSGDTSTTAS. Polar residues-rich tracts occupy residues 191-203 and 210-228; these read DRQN…TARS and TPST…LTQR. Positions 229–239 are enriched in low complexity; it reads SHTSSPASSAS. Polar residues predominate over residues 566–577; it reads RLQTTPQPLTKS. Residues 1112-1126 are compositionally biased toward low complexity; it reads GLSGIGRSSMSSSTG. Residues 1142–1152 show a composition bias toward acidic residues; the sequence is DGSDDEVENDM. Over residues 1164 to 1177 the composition is skewed to basic and acidic residues; it reads ESAREEAEGARTLE. Over residues 1194–1213 the composition is skewed to acidic residues; that stretch reads SSSDDSDEEVVKDEDEDEEA. Composition is skewed to basic and acidic residues over residues 1262–1281 and 1290–1304; these read RDEE…EERR and RRAE…EELQ.

It belongs to the SBNO family. In terms of tissue distribution, expressed in the somatic gonad, neurons, hypodermal cells, seam cells, the excretory system, and intestinal cells (at protein level).

The protein localises to the nucleus. Transcriptional activator that functions upstream of the let-60/Ras and let-23/EGFR signaling pathways to positively regulate lin-3 expression and thereby promote vulval induction. Plays a role in excretory duct development. Plays a role in male tail development. In Caenorhabditis elegans, this protein is Protein strawberry notch homolog.